The following is a 206-amino-acid chain: Large ribosomal subunit protein uL4 (206 aa).

Residues 44 to 78 form a disordered region; sequence RSGNRAQKDREQVKHTTKKPWRQKGTGRARAGMSS. The span at 58 to 70 shows a compositional bias: basic residues; that stretch reads HTTKKPWRQKGTG.

This sequence belongs to the universal ribosomal protein uL4 family. Part of the 50S ribosomal subunit.

Its function is as follows. One of the primary rRNA binding proteins, this protein initially binds near the 5'-end of the 23S rRNA. It is important during the early stages of 50S assembly. It makes multiple contacts with different domains of the 23S rRNA in the assembled 50S subunit and ribosome. Functionally, forms part of the polypeptide exit tunnel. In Paraburkholderia phytofirmans (strain DSM 17436 / LMG 22146 / PsJN) (Burkholderia phytofirmans), this protein is Large ribosomal subunit protein uL4.